The primary structure comprises 94 residues: ESAT-6-like protein EsxO (94 aa).

This sequence belongs to the WXG100 family. ESAT-6 subfamily. In terms of assembly, forms a complex with EsxP.

The protein localises to the secreted. The polypeptide is ESAT-6-like protein EsxO (Mycobacterium tuberculosis (strain CDC 1551 / Oshkosh)).